The sequence spans 169 residues: Regulator of G-protein signaling rgs-2 (169 aa).

In terms of domain architecture, RGS spans G39 to V158.

In terms of processing, may be phosphorylated and activated by egl-4. In terms of tissue distribution, expressed in a subset of neurons including ventral cord and head- and tail-ganglia neurons. Also expressed in non-neuronal cells including pharyngeal and uterine muscles.

Its function is as follows. Weakly inhibits G protein signaling in nervous system, interacting preferentially with the G(O) subfamily member goa-1. In vitro, it acts as a GTPase activator of goa-1. Rgs-1 and rgs-2 redundantly adjust signaling when worms are fed to allow rapid induction of egg-laying behavior. Modulates chemotaxis responses by regulating negatively the sensitivity to quinine in ASH sensory neurons. In Caenorhabditis elegans, this protein is Regulator of G-protein signaling rgs-2 (rgs-2).